The following is a 49-amino-acid chain: IgW transmembrane form Tm2T7/Tm7T7/Tm3T3 (49 aa).

The N-linked (GlcNAc...) asparagine glycan is linked to N3. A helical transmembrane segment spans residues 25-45; sequence VAAFAILFILSFLYSTFVTVV.

Expressed in the spleen. May also be expressed in other lymphoid tissues.

It is found in the membrane. This Heterodontus francisci (Horn shark) protein is IgW transmembrane form Tm2T7/Tm7T7/Tm3T3.